We begin with the raw amino-acid sequence, 336 residues long: Alpha-N-acetylgalactosaminide alpha-2,6-sialyltransferase 5 (336 aa).

At 1 to 8 (MKTLMRHG) the chain is on the cytoplasmic side. The helical; Signal-anchor for type II membrane protein transmembrane segment at 9–29 (LAVCLALTTMCTSLLLVYSSL) threads the bilayer. The Lumenal segment spans residues 30 to 336 (GGQKERPPQQ…INHPENKPVF (307 aa)). Positions 32–81 (QKERPPQQQQQQQQQQQQASATGSSQPAAESSTQQRPGVPAGPRPLDGYL) are disordered. Over residues 38–49 (QQQQQQQQQQQQ) the composition is skewed to low complexity. Residues 50–67 (ASATGSSQPAAESSTQQR) are compositionally biased toward polar residues. Residues Cys96 and Cys245 are joined by a disulfide bond. N-linked (GlcNAc...) asparagine glycans are attached at residues Asn137 and Asn161.

It belongs to the glycosyltransferase 29 family.

It is found in the golgi apparatus membrane. The enzyme catalyses a ganglioside GM1b (d18:1(4E)) + CMP-N-acetyl-beta-neuraminate = a ganglioside GD1alpha (d18:1(4E)) + CMP + H(+). It catalyses the reaction N-acetyl-alpha-neuraminosyl-(2-&gt;3)-beta-D-galactosyl-(1-&gt;3)-N-acetyl-beta-D-glucosaminyl-(1-&gt;3)-beta-D-galactosyl-(1-&gt;4)-beta-D-glucosyl-(1&lt;-&gt;1')-N-acyl-sphing-4-enine + CMP-N-acetyl-beta-neuraminate = N-acetyl-alpha-neuraminosyl-(2-&gt;3)-beta-D-galactosyl-(1-&gt;3)-[N-acetyl-alpha-neuraminosyl-(2-&gt;6)]-N-acetyl-beta-D-glucosaminyl-(1-&gt;3)-beta-D-galactosyl-(1-&gt;4)-beta-D-glucosyl-(1&lt;-&gt;1')-N-acyl-sphing-4-enine + CMP + H(+). The protein operates within glycolipid biosynthesis. In terms of biological role, predominantly catalyzes the biosynthesis of ganglioside GD1alpha from GM1b in the brain, by transferring the sialyl group (N-acetyl-alpha-neuraminyl or NeuAc) from CMP-NeuAc to the GalNAc residue on the NeuAc-alpha-2,3-Gal-beta-1,3-GalNAc sequence of GM1b. GD1alpha is a critical molecule in the communication and interaction between neuronal cells and their supportive cells, particularly in brain tissues, and functions as an adhesion molecule in the process of metastasis. Also shows activity towards sialyl Lc4Cer (N-acetyl-alpha-neuraminosyl-(2-&gt;3)-beta-D-galactosyl-(1-&gt;3)-N-acetyl-beta-D-glucosaminyl-(1-&gt;3)-beta-D-galactosyl-(1-&gt;4)-beta-D-glucosyl-(1&lt;-&gt;1')-N-acyl-sphing-4-enine) generating disialyl Lc4Cer, which can lead to the synthesis of disialyl Lewis a (Le(a)), suggested to be a cancer-associated antigen. This chain is Alpha-N-acetylgalactosaminide alpha-2,6-sialyltransferase 5 (ST6GALNAC5), found in Homo sapiens (Human).